The chain runs to 282 residues: Elongation factor Ts (282 aa).

The segment at 80-83 is involved in Mg(2+) ion dislocation from EF-Tu; that stretch reads TDFV.

This sequence belongs to the EF-Ts family.

The protein resides in the cytoplasm. Its function is as follows. Associates with the EF-Tu.GDP complex and induces the exchange of GDP to GTP. It remains bound to the aminoacyl-tRNA.EF-Tu.GTP complex up to the GTP hydrolysis stage on the ribosome. This Chlamydia muridarum (strain MoPn / Nigg) protein is Elongation factor Ts (tsf).